A 129-amino-acid chain; its full sequence is Follitropin subunit beta (129 aa).

An N-terminal signal peptide occupies residues Met1–Cys18. Disulfide bonds link Cys21/Cys69, Cys35/Cys84, Cys38/Cys122, Cys46/Cys100, Cys50/Cys102, and Cys105/Cys112. 2 N-linked (GlcNAc...) asparagine glycosylation sites follow: Asn25 and Asn42.

Belongs to the glycoprotein hormones subunit beta family. Heterodimer. The active follitropin is a heterodimer composed of an alpha chain/CGA shared with other hormones and a unique beta chain/FSHB shown here.

It localises to the secreted. Its function is as follows. Together with the alpha chain CGA constitutes follitropin, the follicle-stimulating hormone, and provides its biological specificity to the hormone heterodimer. Binds FSHR, a G protein-coupled receptor, on target cells to activate downstream signaling pathways. Follitropin is involved in follicle development and spermatogenesis in reproductive organs. The sequence is that of Follitropin subunit beta (FSHB) from Homo sapiens (Human).